The following is a 78-amino-acid chain: Acyl carrier protein (78 aa).

One can recognise a Carrier domain in the interval 2 to 77 (SDIAERVKKI…DAIKFLEKNS (76 aa)). Position 37 is an O-(pantetheine 4'-phosphoryl)serine (S37).

This sequence belongs to the acyl carrier protein (ACP) family. Post-translationally, 4'-phosphopantetheine is transferred from CoA to a specific serine of apo-ACP by AcpS. This modification is essential for activity because fatty acids are bound in thioester linkage to the sulfhydryl of the prosthetic group.

The protein resides in the cytoplasm. It participates in lipid metabolism; fatty acid biosynthesis. Carrier of the growing fatty acid chain in fatty acid biosynthesis. In Methylorubrum extorquens (strain CM4 / NCIMB 13688) (Methylobacterium extorquens), this protein is Acyl carrier protein.